The following is a 434-amino-acid chain: Enolase (434 aa).

(2R)-2-phosphoglycerate is bound at residue Q165. E207 acts as the Proton donor in catalysis. 3 residues coordinate Mg(2+): D244, E291, and D318. (2R)-2-phosphoglycerate-binding residues include K343, R372, S373, and K394. The Proton acceptor role is filled by K343.

It belongs to the enolase family. It depends on Mg(2+) as a cofactor.

It localises to the cytoplasm. It is found in the secreted. The protein resides in the cell surface. It carries out the reaction (2R)-2-phosphoglycerate = phosphoenolpyruvate + H2O. Its pathway is carbohydrate degradation; glycolysis; pyruvate from D-glyceraldehyde 3-phosphate: step 4/5. In terms of biological role, catalyzes the reversible conversion of 2-phosphoglycerate (2-PG) into phosphoenolpyruvate (PEP). It is essential for the degradation of carbohydrates via glycolysis. The polypeptide is Enolase (Staphylococcus haemolyticus (strain JCSC1435)).